We begin with the raw amino-acid sequence, 240 residues long: Cytochrome c-551 (240 aa).

Heme c-binding residues include cysteine 41, cysteine 44, histidine 45, cysteine 128, cysteine 132, and histidine 133.

In terms of processing, binds 2 heme c groups per subunit.

The polypeptide is Cytochrome c-551 (Rhodocyclus tenuis (Rhodospirillum tenue)).